The following is a 251-amino-acid chain: Probable transcriptional regulatory protein PMI1113 (251 aa).

It belongs to the TACO1 family.

Its subcellular location is the cytoplasm. The protein is Probable transcriptional regulatory protein PMI1113 of Proteus mirabilis (strain HI4320).